Here is a 372-residue protein sequence, read N- to C-terminus: Chorismate synthase (372 aa).

Residue arginine 48 participates in NADP(+) binding. Residues 125-127 (RSS), glycine 285, 300-304 (KPTPS), and arginine 327 contribute to the FMN site.

It belongs to the chorismate synthase family. FMNH2 serves as cofactor.

The enzyme catalyses 5-O-(1-carboxyvinyl)-3-phosphoshikimate = chorismate + phosphate. Its pathway is metabolic intermediate biosynthesis; chorismate biosynthesis; chorismate from D-erythrose 4-phosphate and phosphoenolpyruvate: step 7/7. Its function is as follows. Catalyzes the anti-1,4-elimination of the C-3 phosphate and the C-6 proR hydrogen from 5-enolpyruvylshikimate-3-phosphate (EPSP) to yield chorismate, which is the branch point compound that serves as the starting substrate for the three terminal pathways of aromatic amino acid biosynthesis. This reaction introduces a second double bond into the aromatic ring system. The chain is Chorismate synthase from Methanocella arvoryzae (strain DSM 22066 / NBRC 105507 / MRE50).